The chain runs to 77 residues: Translation initiation factor IF-1, chloroplastic (77 aa).

The S1-like domain maps to 1–71; it reads MKEQKLIHEG…TRGRIIYRLR (71 aa).

Belongs to the IF-1 family. As to quaternary structure, component of the 30S ribosomal translation pre-initiation complex which assembles on the 30S ribosome in the order IF-2 and IF-3, IF-1 and N-formylmethionyl-tRNA(fMet); mRNA recruitment can occur at any time during PIC assembly.

The protein localises to the plastid. The protein resides in the chloroplast. Its function is as follows. One of the essential components for the initiation of protein synthesis. Stabilizes the binding of IF-2 and IF-3 on the 30S subunit to which N-formylmethionyl-tRNA(fMet) subsequently binds. Helps modulate mRNA selection, yielding the 30S pre-initiation complex (PIC). Upon addition of the 50S ribosomal subunit IF-1, IF-2 and IF-3 are released leaving the mature 70S translation initiation complex. This is Translation initiation factor IF-1, chloroplastic from Acorus calamus var. americanus (American sweet flag).